The chain runs to 287 residues: tRNA pseudouridine synthase B (287 aa).

The Nucleophile role is filled by aspartate 38.

The protein belongs to the pseudouridine synthase TruB family. Type 1 subfamily.

The catalysed reaction is uridine(55) in tRNA = pseudouridine(55) in tRNA. Responsible for synthesis of pseudouridine from uracil-55 in the psi GC loop of transfer RNAs. The protein is tRNA pseudouridine synthase B of Mycoplasma mobile (strain ATCC 43663 / 163K / NCTC 11711) (Mesomycoplasma mobile).